A 1388-amino-acid chain; its full sequence is Kinesin-like protein KIF15-A (1388 aa).

In terms of domain architecture, Kinesin motor spans 26–364 (AIKVFVRIRP…LQFAQRAKLI (339 aa)). 110-117 (GQTGSGKT) provides a ligand contact to ATP. A coiled-coil region spans residues 369-1383 (VVNEDTQGNV…ENLFLKESKK (1015 aa)). A disordered region spans residues 1127–1156 (EQEKIRPASSNSSSPVVLPETPRTPEGNPY). Residues 1139–1388 (SSPVVLPETP…KESKKCEHCN (250 aa)) are necessary for its targeting to microtubule minus ends.

The protein belongs to the TRAFAC class myosin-kinesin ATPase superfamily. Kinesin family. KLP2 subfamily. Homodimer. Dimerization is required for targeting to microtubule minus ends. Found in a complex with tpx2 and microtubules. Its association with microtubules and targeting to microtubule minus ends requires tpx2. As to expression, strongly expressed in testis and weakly in lung (at protein level).

Its subcellular location is the cytoplasm. The protein localises to the cytoskeleton. It localises to the microtubule organizing center. The protein resides in the centrosome. It is found in the spindle. Its subcellular location is the spindle pole. Plus-end directed kinesin-like motor enzyme involved in mitotic spindle assembly. Required for centrosome separation and maintenance of spindle bipolarity during mitosis. In Xenopus laevis (African clawed frog), this protein is Kinesin-like protein KIF15-A (kif15-a).